The following is a 529-amino-acid chain: Glycerol kinase 5 (529 aa).

Residues threonine 22 and threonine 23 each coordinate ATP. Glycerol is bound by residues arginine 92, aspartate 269, and glutamine 270. ATP is bound by residues threonine 291, glycine 334, and glycine 434.

This sequence belongs to the FGGY kinase family.

It is found in the cytoplasm. The enzyme catalyses glycerol + ATP = sn-glycerol 3-phosphate + ADP + H(+). The protein operates within polyol metabolism; glycerol degradation via glycerol kinase pathway; sn-glycerol 3-phosphate from glycerol: step 1/1. Skin-specific kinase that plays a key role in glycerol metabolism, catalyzing its phosphorylation to produce sn-glycerol 3-phosphate. Involved in skin-specific regulation of sterol regulatory element-binding protein (SREBP) processing and lipid biosynthesis. The polypeptide is Glycerol kinase 5 (gk5) (Danio rerio (Zebrafish)).